We begin with the raw amino-acid sequence, 1465 residues long: DNA polymerase III PolC-type (1465 aa).

An Exonuclease domain is found at Y427–L583.

Belongs to the DNA polymerase type-C family. PolC subfamily.

It is found in the cytoplasm. The enzyme catalyses DNA(n) + a 2'-deoxyribonucleoside 5'-triphosphate = DNA(n+1) + diphosphate. Functionally, required for replicative DNA synthesis. This DNA polymerase also exhibits 3' to 5' exonuclease activity. The polypeptide is DNA polymerase III PolC-type (Streptococcus pyogenes serotype M5 (strain Manfredo)).